The following is a 3646-amino-acid chain: Platelet adherence protein A (3646 aa).

A signal peptide spans 1-33 (MKDFLKKVLILFTVLLMSMPSSVLNLGTSVVRA). The does not bind platelets stretch occupies residues 34-359 (DDPLNIETRR…KNVSFYVNEQ (326 aa)). The tract at residues 34–690 (DDPLNIETRR…NQDAHAKTKD (657 aa)) is F2, binds platelets, fibronectin, vitronectin, salivary pellicle, causes ADP secretion by dense granules. Residues 34 to 1328 (DDPLNIETRR…KFVLSDTLEE (1295 aa)) are binds platelets. The VWFA domain occupies 75–373 (DLVILQDASG…VFSQKILESV (299 aa)). An Integrin-like recognition motif NGR motif is present at residues 214-216 (NGR). The short motif at 416–418 (RGT) is the Integrin-like recognition motif RGT element. The tract at residues 439-466 (KNSFDYDLSKEARAPETDEDSEVDPPEN) is disordered. Residues 445-454 (DLSKEARAPE) are compositionally biased toward basic and acidic residues. The Integrin-like recognition motif AGD motif lies at 485–487 (AGD). A central region with RrgB repeats region spans residues 709–3205 (TEVDKKVNEK…TVPNKATIAF (2497 aa)). Basic and acidic residues-rich tracts occupy residues 1124–1135 (KDKNDHKGEKET) and 1563–1573 (DHNPKFHKDSN). 12 disordered regions span residues 1124-1153 (KDKN…KKIN), 1563-1589 (DHNP…PIEK), 2011-2036 (FNND…EPEL), 2170-2198 (EKDS…KPSA), 2320-2343 (KTEK…IKKE), 2467-2492 (PNRP…PEIK), 2611-2644 (ASYR…PIEK), 2767-2792 (FNND…EPEL), 2916-2948 (PNKP…NSKP), 3202-3252 (TIAF…NPST), 3371-3412 (AAAK…AALE), and 3550-3618 (NDKP…PKTG). Polar residues predominate over residues 2011–2022 (FNNDPGTEQSSK). Residues 2767–2778 (FNNDPGTEQSSK) are compositionally biased toward polar residues. Positions 3210–3220 (GKNGTKESNPV) are enriched in polar residues. Over residues 3223 to 3237 (RPRDPEKPEEPKPNE) the composition is skewed to basic and acidic residues. 2 coiled-coil regions span residues 3326–3376 (IAKI…AKEK) and 3408–3475 (VAAL…VNDK). Residues 3371-3406 (AAAKEKAAAAPATPAPASDSDAGNATATPAPADNNA) are compositionally biased toward low complexity. Polar residues predominate over residues 3550 to 3560 (NDKPKVTNTVN). Over residues 3563–3605 (PPEPTTPPQTPPHTPPTTPGTPPPTTPDTPPAPKGDLPPAPTP) the composition is skewed to pro residues. An LPXTG sorting signal motif is present at residues 3614-3618 (LPKTG). Residue Thr-3617 is modified to Pentaglycyl murein peptidoglycan amidated threonine. The propeptide at 3618–3646 (GTSATMVNEVIIGMILVLMGLLLRRKPKH) is removed by sortase.

Its subcellular location is the secreted. The protein resides in the cell wall. With respect to regulation, whole bacterial adhesion to Chinese hamster ovary cells expressing GPIIbIIIa is abrogated by integrin inhibitor RGDS and GPIIbIIIa inhibitor Abciximab. Its function is as follows. A cell wall protein involved with Hsa in host cell interactions required for colonization and pathogenesis. Involved in recognition of platelets. Interacts with human platelet integrin receptor GPIIbIIIa (a complex of ITGA2B and ITGB3). Involved in platelet spreading, presumably by activation of outside-in signaling leading to platelet activation and then spreading. Spreading also involves GPIIbIIIa. Binding to platelets under static conditions causes platelet dense granules to secrete ADP (similar to release induced by fibrinogen binding), has no effect on platelet alpha granule release. The N-terminal 656 aa residue fragment (called F2) also binds platelets, causes dense granule secretion and allows platelet spreading. Acts in concert with Hsa to promote binding to human fibronectin (FN1) and vitronectin (VTN), and biofilm formation. F2 bind activated platelets more strongly than unactivated platelets. Binding to both FN1 and VTN is mediated at least in part by their glycosylation. The protein is Platelet adherence protein A of Streptococcus gordonii (strain Challis / ATCC 35105 / BCRC 15272 / CH1 / DL1 / V288).